The primary structure comprises 216 residues: Ras-related protein Rab-2B (216 aa).

Residues Gly16, Val17, Gly18, Lys19, Ser20, and Cys21 each contribute to the GDP site. Gly16, Val17, Gly18, Lys19, Ser20, Cys21, and Thr38 together coordinate GTP. Ser20 contacts Mg(2+). Positions 37–42 (LTIGVE) match the Switch 1 motif. Mg(2+) contacts are provided by Thr38 and Asp61. The Switch 2 motif lies at 63-72 (AGQESFRSIT). Residues Gly64, Asn119, Lys120, Asp122, Ala150, and Lys151 each coordinate GTP. Asn119 contacts GDP. 3 residues coordinate GDP: Asp122, Ala150, and Lys151. The interval 189–216 (PQQSISTSVGPSASQRNSRDIGSNSGCC) is disordered. Ser202 is modified (phosphoserine). 2 S-geranylgeranyl cysteine lipidation sites follow: Cys215 and Cys216.

Belongs to the small GTPase superfamily. Rab family. In terms of assembly, interacts (in GTP-bound form) with GARIN4 (via N-terminus). Interacts (in GTP-bound form) with GARIN5A. Interacts (in GTP-bound form) with GARIN1B. Interacts with VPS39 and VPS41. Mg(2+) serves as cofactor. Expressed in kidney, prostate, lung, liver, thymus, colon, pancreas, and skeletal muscle, and low levels in placenta. Not detected in heart, brain, spleen, testis, ovary, small intestine and leukocyte.

The protein resides in the cell membrane. It localises to the endoplasmic reticulum membrane. It is found in the golgi apparatus membrane. The protein localises to the cytoplasmic vesicle. Its subcellular location is the secretory vesicle. The protein resides in the acrosome. It localises to the autophagosome membrane. The catalysed reaction is GTP + H2O = GDP + phosphate + H(+). Its activity is regulated as follows. Regulated by guanine nucleotide exchange factors (GEFs) which promote the exchange of bound GDP for free GTP, GTPase activating proteins (GAPs) which increase the GTP hydrolysis activity, and GDP dissociation inhibitors (GDIs) which inhibit the dissociation of the nucleotide from the GTPase. Its function is as follows. The small GTPases Rab are key regulators of intracellular membrane trafficking, from the formation of transport vesicles to their fusion with membranes. Rabs cycle between active GTP-bound and inactive GDP-bound states. In their active state, drive transport of vesicular carriers from donor organelles to acceptor organelles to regulate the membrane traffic that maintains organelle identity and morphology. Regulates the compacted morphology of the Golgi. Promotes cytosolic DNA-induced innate immune responses. Regulates IFN responses against DNA viruses by regulating the CGAS-STING signaling axis. Together with RAB2A redundantly required for efficient autophagic flux. This is Ras-related protein Rab-2B from Homo sapiens (Human).